Here is a 66-residue protein sequence, read N- to C-terminus: Large ribosomal subunit protein bL33c (66 aa).

The protein belongs to the bacterial ribosomal protein bL33 family.

The protein localises to the plastid. It localises to the chloroplast. The chain is Large ribosomal subunit protein bL33c from Cicer arietinum (Chickpea).